We begin with the raw amino-acid sequence, 446 residues long: MLKLILMMIFISPICFMQGLFWMVHNLLFVITFVLILMNFCLNYFVNISYFMGFDVLSYGLILLSFWICSLMIVASESVNKYNNYKNLFLFNVLMLLIFLVLTFSSMNLFMFYLFFESSLIPTLFLILGWGYQPERLQAGVYLLFYTLLVSLPLLVGIFYLYKNCNTMNFYLLSNYMFNCNLLYLAMILAFLVKMPMFLVHLWLPKAHVEAPVSGSMILAGIMLKLGGYGLLAVFSFLQLIGLKYNYIWVSISLIGGVLISLVCLRQTDLKALIAYSSVAHMGIVLGGLMTLSYWGLSGSYTLMIGHGLCSSGLFCLANITYERLGSRSLLINKGLLNFMPSMTLWWFLLSVCNMAAPPSLNLLGEISLLNSIVSWSWLTMISLSFLSFFSAAYTLYLYAYSQHGKIFSGVYSFSGGNIREYFLLFLHWFPLNLLILKSEVCLFWI.

14 consecutive transmembrane segments (helical) span residues 4-24, 28-48, 56-76, 88-105, 109-131, 141-161, 182-202, 218-238, 245-265, 272-292, 297-317, 330-350, 373-393, and 426-446; these read LILM…FWMV, LFVI…FVNI, VLSY…IVAS, LFLF…LTFS, LFMF…LGWG, VYLL…IFYL, LLYL…LVHL, ILAG…FSFL, YNYI…LVCL, ALIA…LMTL, LSGS…LFCL, LLIN…WFLL, IVSW…FSAA, and FLHW…LFWI.

It belongs to the complex I subunit 4 family.

Its subcellular location is the mitochondrion membrane. It catalyses the reaction a ubiquinone + NADH + 5 H(+)(in) = a ubiquinol + NAD(+) + 4 H(+)(out). In terms of biological role, core subunit of the mitochondrial membrane respiratory chain NADH dehydrogenase (Complex I) that is believed to belong to the minimal assembly required for catalysis. Complex I functions in the transfer of electrons from NADH to the respiratory chain. The immediate electron acceptor for the enzyme is believed to be ubiquinone. This is NADH-ubiquinone oxidoreductase chain 4 (ND4) from Ceratitis capitata (Mediterranean fruit fly).